Here is a 471-residue protein sequence, read N- to C-terminus: FAD-dependent monooxygenase andE (471 aa).

3 residues coordinate FAD: Glu-35, Gly-49, and Arg-108. Tyr-216 is a catalytic residue. FAD contacts are provided by Asp-308 and Ala-321. A run of 2 helical transmembrane segments spans residues Leu-403 to Pro-423 and Thr-443 to Leu-463.

Belongs to the paxM FAD-dependent monooxygenase family. FAD serves as cofactor.

It localises to the membrane. It functions in the pathway secondary metabolite biosynthesis; terpenoid biosynthesis. Functionally, FAD-dependent monooxygenase; part of the gene cluster that mediates the biosynthesis of anditomin, a fungal meroterpenoid. The first step of the pathway is the synthesis of 3,5-dimethylorsellinic acid (DMOA) by the polyketide synthase andM. DMOA is then converted to the phthalide compound 5,7-dihydroxy-4,6-dimethylphthalide (DHDMP) by the cytochrome P450 monooxygenase andK, which is further prenylated by the prenyltransferase andD to yield farnesyl-DHDMP. Further epoxidation by the FAD-dependent monooxygenase andE leads to epoxyfarnesyl-DHDMP. The next step involves the terpene cyclase andB that converts epoxyfarnesyl-DHDMP into preandiloid A through opening of the epoxide ring followed by the cyclization of the farnesyl moiety. Preandiloid A is in turn oxidized at the C-3 hydroxyl group to yield preandiloid B by the dehydrogenase andC. The dioxygenase andA is solely responsible for the dehydrogenation of preandiloid B leading to the enone preandiloid C, as well as for the intriguing structural rearrangement to generate the bicyclo[2.2.2]octane core, transforming preandiloid C into andiconin. FAD-binding monooxygenase andJ then produces andilesin D which is reduced by dehydrogenase andI to yield andilesin A. Action of acetyltransferase andG followed by a spontaneous acetate elimination leads then to andilesin B, which is in turn substrate of the short chain dehydrogenase andH to yield andilesin C. Finally, the dioxygenase andF catalyzes the transformation of andilesin C to anditomin. This Emericella variicolor (Aspergillus stellatus) protein is FAD-dependent monooxygenase andE.